The sequence spans 121 residues: Flagellar protein FliT (121 aa).

A required for homodimerization region spans residues 1-50 (MNNAPHLYFAWQQLVEKSQLMLRLATEEQWDELIASEMAYVNAVQEIAHL). The interval 60–98 (MQEQLRPMLRLILDNESKVKQLLQIRMDELAKLVGQSSV) is fliD binding.

The protein belongs to the FliT family. In terms of assembly, homodimer. Interacts with FliD and FlhC.

It is found in the cytoplasm. Its subcellular location is the cytosol. Its function is as follows. Dual-function protein that regulates the transcription of class 2 flagellar operons and that also acts as an export chaperone for the filament-capping protein FliD. As a transcriptional regulator, acts as an anti-FlhDC factor; it directly binds FlhC, thus inhibiting the binding of the FlhC/FlhD complex to class 2 promoters, resulting in decreased expression of class 2 flagellar operons. As a chaperone, effects FliD transition to the membrane by preventing its premature polymerization, and by directing it to the export apparatus. This is Flagellar protein FliT from Escherichia coli O9:H4 (strain HS).